The following is an 837-amino-acid chain: Semaphorin-4B (837 aa).

The signal sequence occupies residues 1-43; it reads MLRTAMGLRSWLAAPWGALPPRPPLLLLLLLLLLLQPPPPTWA. The Extracellular segment spans residues 44 to 717; it reads LSPRISLPLG…WGADRSYWKE (674 aa). Residues 47 to 523 form the Sema domain; sequence RISLPLGSEE…SHSGVVQVPM (477 aa). Asn69 and Asn96 each carry an N-linked (GlcNAc...) asparagine glycan. 2 disulfide bridges follow: Cys120–Cys131 and Cys149–Cys158. Asn165 carries N-linked (GlcNAc...) asparagine glycosylation. 2 disulfide bridges follow: Cys286/Cys399 and Cys310/Cys359. Asn410 and Asn525 each carry an N-linked (GlcNAc...) asparagine glycan. Positions 525–579 constitute a PSI domain; sequence NCSLYRSCGDCLLARDPYCAWSGSSCKHVSLYQPQLATRPWIQDIEGASAKDLCS. 2 disulfides stabilise this stretch: Cys526–Cys543 and Cys611–Cys656. Residues 604–663 form the Ig-like C2-type domain; the sequence is NTVNTLACPLLSNLATRLWLRNGAPVNASASCHVLPTGDLLLVGTQQLGEFQCWSLEEGF. N-linked (GlcNAc...) asparagine glycosylation occurs at Asn630. The helical transmembrane segment at 718 to 738 threads the bilayer; sequence FLVMCTLFVLAVLLPVLFLLY. Residues 739–837 are Cytoplasmic-facing; the sequence is RHRNSMKVFL…LGSEIRDSVV (99 aa). The interval 767–805 is disordered; the sequence is PETRPLNGLGPPSTPLDHRGYQSLSDSPPGSRVFTESEK. 3 positions are modified to phosphoserine: Ser793, Ser818, and Ser830.

It belongs to the semaphorin family.

The protein localises to the membrane. In terms of biological role, inhibits axonal extension by providing local signals to specify territories inaccessible for growing axons. This Homo sapiens (Human) protein is Semaphorin-4B.